We begin with the raw amino-acid sequence, 153 residues long: Putative adenylate kinase (153 aa).

ATP contacts are provided by glycine 12, glycine 14, lysine 15, serine 16, and threonine 17. The NMP stretch occupies residues 31–47 (EGNELAKEYGCLFDEEV). Residues 94-104 (ARGYSEEKIQE) are LID. Arginine 95 is a binding site for ATP.

It belongs to the adenylate kinase family. AK6 subfamily. In terms of assembly, interacts with uS11. Not a structural component of 40S pre-ribosomes, but transiently interacts with them by binding to uS11.

The catalysed reaction is AMP + ATP = 2 ADP. The enzyme catalyses ATP + H2O = ADP + phosphate + H(+). Functionally, broad-specificity nucleoside monophosphate (NMP) kinase that catalyzes the reversible transfer of the terminal phosphate group between nucleoside triphosphates and monophosphates. Also has ATPase activity. Involved in the late maturation steps of the 30S ribosomal particles, specifically 16S rRNA maturation. While NMP activity is not required for ribosome maturation, ATPase activity is. Associates transiently with small ribosomal subunit protein uS11. ATP hydrolysis breaks the interaction with uS11. May temporarily remove uS11 from the ribosome to enable a conformational change of the ribosomal RNA that is needed for the final maturation step of the small ribosomal subunit. The polypeptide is Putative adenylate kinase (Thermoplasma volcanium (strain ATCC 51530 / DSM 4299 / JCM 9571 / NBRC 15438 / GSS1)).